The sequence spans 347 residues: D-alanine--D-alanine ligase (347 aa).

Residues 131 to 333 enclose the ATP-grasp domain; the sequence is KRVLESAGIA…YPKLIERLVD (203 aa). 161–216 contacts ATP; that stretch reads EEKLAYPVFTKPSNMGSSVGISKSENQEELRQALKLAFRYDSRVLVEQGVNAREIE. Asp287, Glu300, and Asn302 together coordinate Mg(2+).

The protein belongs to the D-alanine--D-alanine ligase family. The cofactor is Mg(2+). It depends on Mn(2+) as a cofactor.

It is found in the cytoplasm. The enzyme catalyses 2 D-alanine + ATP = D-alanyl-D-alanine + ADP + phosphate + H(+). Its pathway is cell wall biogenesis; peptidoglycan biosynthesis. Functionally, cell wall formation. This chain is D-alanine--D-alanine ligase, found in Streptococcus pneumoniae serotype 4 (strain ATCC BAA-334 / TIGR4).